Consider the following 355-residue polypeptide: Peptide chain release factor 1 (355 aa).

N5-methylglutamine is present on Q233.

It belongs to the prokaryotic/mitochondrial release factor family. Post-translationally, methylated by PrmC. Methylation increases the termination efficiency of RF1.

The protein localises to the cytoplasm. Peptide chain release factor 1 directs the termination of translation in response to the peptide chain termination codons UAG and UAA. The sequence is that of Peptide chain release factor 1 from Bacillus anthracis.